Reading from the N-terminus, the 589-residue chain is DNA mismatch repair protein MutL (589 aa).

Disordered stretches follow at residues 330–355 (LQRREAPQRPEPARPYTTPPPSSHRE) and 374–394 (RIYEQPEPYRPPEPPAASEPT). Positions 331-341 (QRREAPQRPEP) are enriched in basic and acidic residues. Positions 381–390 (PYRPPEPPAA) are enriched in pro residues.

Belongs to the DNA mismatch repair MutL/HexB family.

In terms of biological role, this protein is involved in the repair of mismatches in DNA. It is required for dam-dependent methyl-directed DNA mismatch repair. May act as a 'molecular matchmaker', a protein that promotes the formation of a stable complex between two or more DNA-binding proteins in an ATP-dependent manner without itself being part of a final effector complex. This is DNA mismatch repair protein MutL from Trichlorobacter lovleyi (strain ATCC BAA-1151 / DSM 17278 / SZ) (Geobacter lovleyi).